Here is a 198-residue protein sequence, read N- to C-terminus: Protein GrpE (198 aa).

Residues 1–56 are disordered; sequence MVEKKKSQAEKNNQSATEEEIEKAVKGSKRDSNAADEKNSASAAASSSAVSDAEPA. The span at 22 to 39 shows a compositional bias: basic and acidic residues; the sequence is EKAVKGSKRDSNAADEKN. A compositionally biased stretch (low complexity) spans 40–56; the sequence is SASAAASSSAVSDAEPA.

The protein belongs to the GrpE family. As to quaternary structure, homodimer.

It is found in the cytoplasm. Its function is as follows. Participates actively in the response to hyperosmotic and heat shock by preventing the aggregation of stress-denatured proteins, in association with DnaK and GrpE. It is the nucleotide exchange factor for DnaK and may function as a thermosensor. Unfolded proteins bind initially to DnaJ; upon interaction with the DnaJ-bound protein, DnaK hydrolyzes its bound ATP, resulting in the formation of a stable complex. GrpE releases ADP from DnaK; ATP binding to DnaK triggers the release of the substrate protein, thus completing the reaction cycle. Several rounds of ATP-dependent interactions between DnaJ, DnaK and GrpE are required for fully efficient folding. This chain is Protein GrpE, found in Oenococcus oeni (strain ATCC BAA-331 / PSU-1).